The chain runs to 315 residues: Acetaldehyde dehydrogenase 2 (315 aa).

NAD(+) is bound at residue 15-18 (SGNI). C135 functions as the Acyl-thioester intermediate in the catalytic mechanism. NAD(+)-binding positions include 166-174 (SAGPGTRAN) and N293.

Belongs to the acetaldehyde dehydrogenase family.

The enzyme catalyses acetaldehyde + NAD(+) + CoA = acetyl-CoA + NADH + H(+). The protein is Acetaldehyde dehydrogenase 2 of Paraburkholderia phymatum (strain DSM 17167 / CIP 108236 / LMG 21445 / STM815) (Burkholderia phymatum).